The sequence spans 169 residues: Inorganic pyrophosphatase (169 aa).

Lys-20, Arg-34, and Tyr-46 together coordinate substrate. Residues Asp-56, Asp-61, and Asp-93 each coordinate Mg(2+). Residue Tyr-130 coordinates substrate.

It belongs to the PPase family. As to quaternary structure, homohexamer. Mg(2+) serves as cofactor.

The protein resides in the cytoplasm. The catalysed reaction is diphosphate + H2O = 2 phosphate + H(+). In terms of biological role, catalyzes the hydrolysis of inorganic pyrophosphate (PPi) forming two phosphate ions. The sequence is that of Inorganic pyrophosphatase from Methanosarcina mazei (strain ATCC BAA-159 / DSM 3647 / Goe1 / Go1 / JCM 11833 / OCM 88) (Methanosarcina frisia).